The primary structure comprises 144 residues: 3-hydroxyacyl-[acyl-carrier-protein] dehydratase FabZ (144 aa).

Residue histidine 48 is part of the active site.

The protein belongs to the thioester dehydratase family. FabZ subfamily.

It localises to the cytoplasm. The enzyme catalyses a (3R)-hydroxyacyl-[ACP] = a (2E)-enoyl-[ACP] + H2O. Its function is as follows. Involved in unsaturated fatty acids biosynthesis. Catalyzes the dehydration of short chain beta-hydroxyacyl-ACPs and long chain saturated and unsaturated beta-hydroxyacyl-ACPs. This is 3-hydroxyacyl-[acyl-carrier-protein] dehydratase FabZ from Listeria welshimeri serovar 6b (strain ATCC 35897 / DSM 20650 / CCUG 15529 / CIP 8149 / NCTC 11857 / SLCC 5334 / V8).